The chain runs to 357 residues: DNA integrity scanning protein DisA (357 aa).

The DAC domain occupies 3 to 141 (RPTLRETVAR…GGERHVVADS (139 aa)). Residues G70, L88, and 101–105 (TRHRS) each bind ATP.

This sequence belongs to the DisA family. Homooctamer. The cofactor is Mg(2+).

It carries out the reaction 2 ATP = 3',3'-c-di-AMP + 2 diphosphate. In terms of biological role, participates in a DNA-damage check-point. DisA forms globular foci that rapidly scan along the chromosomes searching for lesions. Functionally, also has diadenylate cyclase activity, catalyzing the condensation of 2 ATP molecules into cyclic di-AMP (c-di-AMP). c-di-AMP likely acts as a signaling molecule that may couple DNA integrity with a cellular process. In Mycobacterium avium (strain 104), this protein is DNA integrity scanning protein DisA.